Here is a 345-residue protein sequence, read N- to C-terminus: uncharacterized protein (345 aa).

Disordered regions lie at residues 1–58 (MPSP…WRGD) and 139–165 (KTNS…NSPK). A compositionally biased stretch (basic and acidic residues) spans 27–39 (IKGEGSDDGKEKS). Over residues 154–165 (KQGSAESKNSPK) the composition is skewed to polar residues.

This sequence belongs to the MG307/MG309/MG338 family.

This is an uncharacterized protein from Mycoplasma pneumoniae (strain ATCC 29342 / M129 / Subtype 1) (Mycoplasmoides pneumoniae).